A 434-amino-acid chain; its full sequence is 3-phosphoshikimate 1-carboxyvinyltransferase (434 aa).

3-phosphoshikimate contacts are provided by K22, S23, and R27. K22 is a phosphoenolpyruvate binding site. The phosphoenolpyruvate site is built by G93 and R121. Residues S168, S169, Q170, S199, D320, and K347 each contribute to the 3-phosphoshikimate site. Q170 is a phosphoenolpyruvate binding site. Residue D320 is the Proton acceptor of the active site. Phosphoenolpyruvate contacts are provided by R351, R394, and K419.

Belongs to the EPSP synthase family. As to quaternary structure, monomer.

The protein localises to the cytoplasm. The enzyme catalyses 3-phosphoshikimate + phosphoenolpyruvate = 5-O-(1-carboxyvinyl)-3-phosphoshikimate + phosphate. The protein operates within metabolic intermediate biosynthesis; chorismate biosynthesis; chorismate from D-erythrose 4-phosphate and phosphoenolpyruvate: step 6/7. Catalyzes the transfer of the enolpyruvyl moiety of phosphoenolpyruvate (PEP) to the 5-hydroxyl of shikimate-3-phosphate (S3P) to produce enolpyruvyl shikimate-3-phosphate and inorganic phosphate. This chain is 3-phosphoshikimate 1-carboxyvinyltransferase, found in Burkholderia cenocepacia (strain HI2424).